The primary structure comprises 251 residues: Chlorocatechol 1,2-dioxygenase (251 aa).

Fe cation is bound by residues Tyr130, Tyr164, His188, and His190.

The protein belongs to the intradiol ring-cleavage dioxygenase family. Requires Fe(3+) as cofactor.

The catalysed reaction is 3-chlorocatechol + O2 = (2E,4Z)-2-chloromuconate + 2 H(+). It catalyses the reaction 3,4-dichlorocatechol + O2 = (2Z,4Z)-2,3-dichloromuconate + 2 H(+). The enzyme catalyses 3,5-dichlorocatechol + O2 = (2E,4E)-2,4-dichloromuconate + 2 H(+). It carries out the reaction 3,6-dichlorocatechol + O2 = (2E,4E)-2,5-dichloromuconate + H(+). The catalysed reaction is 3,4,6-trichlorocatechol + O2 = (2Z,4E)-2,3,5-trichloromuconate + H(+). Its pathway is xenobiotic degradation. Functionally, chlorocatechol 1,2-dioxygenase involved in the degradation of chlorinated benzenes, that occurs via chlorocatechol intermediates. Displays broad substrate specificity. Preferentially cleaves 3-chlorocatechol and 3,4-dichlorocatechol, and shows lower activity on 3,5-dichlorocatechol, 3,6-dichlorocatechol and 3,4,6-trichlorocatechol in vitro. Is not able to convert 3,4,5-trichlorocatechol and 3,4,5,6-tetrachlorocatechol. Thus, probably functions in the degradation pathways of 1,2-dichlorobenzene, 1,4-dichlorobenzene and 1,2,4-trichlorobenzene (via 3,4-dichlorocatechol, 3,6-dichlorocatechol and 3,4,6-trichlorocatechol intermediates, respectively), which allow Pseudomonas sp. strain P51 to grow on these substrates as the sole carbon and energy source. The sequence is that of Chlorocatechol 1,2-dioxygenase from Pseudomonas sp. (strain P51).